The following is a 522-amino-acid chain: MSDRVIIFDTTLRDGEQALAASLSVKEKLQVALALERLGVDVMEVGFPVSSPGDFESVQTIARHIKNSRVCALSRALEKDIDAAAQALSVAEQFRIHTFISTSNIHVESKLKRSFDQVLDMAVGAVKYARRFTDDVEFSCEDAGRTPIDNLCRMVEAAISAGARTINIPDTVGYTVPSEFGGIIQTLFNRVPNIDQAVISVHCHDDLGLSVANSIAAVQAGARQIECTVNGIGERAGNCSLEEIAMILATRKDMLGLYTNINAREIHRTSSLVSQLCNMPIQPNKAIVGSNAFTHSSGIHQDGMLKAQNTYEIMTPESIGLNRNNLNMTSRSGRHVIKHRMEEMGYGAGDYDMDTLYAAFLKLADKKGQVFDYDLEALAFMEAQAEDDDHYVMEQLVVQSDSTEGKATATVRMRVGDEVITEAATGNGPVDAAYNAIARATHRTINISSYKLGAKGEGQNALGQVDITARYDDRNFHGVGLATDVVEASAQALVHVMNLTWRADKVAYCKQQMQQTRELGGV.

The 263-residue stretch at 5–267 (VIIFDTTLRD…YTNINAREIH (263 aa)) folds into the Pyruvate carboxyltransferase domain. Positions 14, 202, 204, and 238 each coordinate Mn(2+). Positions 392–522 (VMEQLVVQSD…MQQTRELGGV (131 aa)) are regulatory domain.

It belongs to the alpha-IPM synthase/homocitrate synthase family. LeuA type 1 subfamily. As to quaternary structure, homodimer. Mn(2+) is required as a cofactor.

It localises to the cytoplasm. The catalysed reaction is 3-methyl-2-oxobutanoate + acetyl-CoA + H2O = (2S)-2-isopropylmalate + CoA + H(+). The protein operates within amino-acid biosynthesis; L-leucine biosynthesis; L-leucine from 3-methyl-2-oxobutanoate: step 1/4. Its function is as follows. Catalyzes the condensation of the acetyl group of acetyl-CoA with 3-methyl-2-oxobutanoate (2-ketoisovalerate) to form 3-carboxy-3-hydroxy-4-methylpentanoate (2-isopropylmalate). In Shewanella amazonensis (strain ATCC BAA-1098 / SB2B), this protein is 2-isopropylmalate synthase.